The chain runs to 536 residues: Velvet complex subunit B (536 aa).

Polar residues predominate over residues 1 to 26; sequence MIQRTTDPAAGSSTSGPPTNSLSWGS. Disordered stretches follow at residues 1–27, 106–143, 157–409, and 508–536; these read MIQR…WGSR, PNAA…AIPF, SAPA…RTLV, and KLPL…EESD. Residues 25–512 enclose the Velvet domain; the sequence is GSRHNGKLYT…NQQNMKLPLR (488 aa). Residues 114 to 143 show a composition bias toward pro residues; the sequence is PPMPAKPRRPTNPPPPSNTHGSPPAPAIPF. Composition is skewed to low complexity over residues 158 to 170 and 190 to 265; these read APAS…SASA and PYGP…YPPY. The segment covering 280–305 has biased composition (polar residues); it reads TSNFDHSQPVTSSVDQETNSPVVTTT. A compositionally biased stretch (basic and acidic residues) spans 306 to 315; it reads ARDDDQREGE. The segment covering 328–342 has biased composition (low complexity); the sequence is PSNSGAPSTSPTAST. Positions 356 to 399 are enriched in basic and acidic residues; that stretch reads EEREGPDGGPDLREPIEPGSTKAREEEDARTGTEKGDPKDKSDA. The span at 400 to 409 shows a compositional bias: polar residues; sequence QRATYTRTLV. Positions 511–525 are enriched in basic residues; sequence LRNRHGSGSKRRRRG.

This sequence belongs to the velvet family. VelB subfamily. In terms of assembly, component of the heterotrimeric velvet complex composed of laeA, veA and velB; VeA acting as a bridging protein between laeA and velB. Forms a heterodimeric complex with vosA; the formation of the velB-vosA complex is light-dependent.

The protein localises to the nucleus. It is found in the cytoplasm. In terms of biological role, component of the velvet transcription factor complex that controls sexual/asexual developmental ratio in response to light, promoting sexual development in the darkness while stimulating asexual sporulation under illumination. The velvet complex acts as a global regulator for secondary metabolite gene expression. Component of the velB-VosA heterodimeric complex that plays a dual role in activating genes associated with spore maturation and repressing certain development-associated genes. The velB-VosA complex binds DNA through the DNA-binding domain of vosA that recognizes an 11-nucleotide consensus sequence 5'-CTGGCCGCGGC-3' consisting of two motifs in the promoters of key developmental regulatory genes. This is Velvet complex subunit B from Schizophyllum commune (strain H4-8 / FGSC 9210) (Split gill fungus).